The following is a 637-amino-acid chain: Chaperone protein HtpG (637 aa).

Residues 1 to 345 (MSQQETHGFQ…SNDLPLNVSR (345 aa)) are a; substrate-binding. The interval 346–562 (EILQDNHITK…EGEMSSQMIK (217 aa)) is b. Residues 563–637 (LMQAAGQPVP…MNQMLLANLK (75 aa)) are c.

This sequence belongs to the heat shock protein 90 family. In terms of assembly, homodimer.

It localises to the cytoplasm. In terms of biological role, molecular chaperone. Has ATPase activity. This chain is Chaperone protein HtpG, found in Shewanella sp. (strain ANA-3).